Consider the following 429-residue polypeptide: Serine hydroxymethyltransferase (429 aa).

(6S)-5,6,7,8-tetrahydrofolate-binding positions include L126 and 130 to 132 (GHL). Residue K235 is modified to N6-(pyridoxal phosphate)lysine. Residue 359–361 (SPF) participates in (6S)-5,6,7,8-tetrahydrofolate binding.

It belongs to the SHMT family. In terms of assembly, homodimer. Requires pyridoxal 5'-phosphate as cofactor.

Its subcellular location is the cytoplasm. The enzyme catalyses (6R)-5,10-methylene-5,6,7,8-tetrahydrofolate + glycine + H2O = (6S)-5,6,7,8-tetrahydrofolate + L-serine. It functions in the pathway one-carbon metabolism; tetrahydrofolate interconversion. Its pathway is amino-acid biosynthesis; glycine biosynthesis; glycine from L-serine: step 1/1. In terms of biological role, catalyzes the reversible interconversion of serine and glycine with tetrahydrofolate (THF) serving as the one-carbon carrier. This reaction serves as the major source of one-carbon groups required for the biosynthesis of purines, thymidylate, methionine, and other important biomolecules. Also exhibits THF-independent aldolase activity toward beta-hydroxyamino acids, producing glycine and aldehydes, via a retro-aldol mechanism. The polypeptide is Serine hydroxymethyltransferase (Parasynechococcus marenigrum (strain WH8102)).